Reading from the N-terminus, the 130-residue chain is Albumin-1 F (130 aa).

The first 26 residues, 1-26, serve as a signal peptide directing secretion; the sequence is MASVKLASLIVLFATLGMFLTKNVGA. Disulfide bonds link C29–C46, C33–C48, and C41–C58. Propeptides lie at residues 64-69 and 123-130; these read VFLRTN and LLKSVSTA.

Post-translationally, the C-terminal glycine may be removed from PA1b.

Functionally, PA1b binds to basic 7S globulin (BG) and stimulates its phosphorylation activity. Involved in the signal transduction system to regulate the growth and differentiation as a hormone peptide. Toxic to various insects through binding to a high affinity binding site in the insect gut. The sequence is that of Albumin-1 F from Pisum sativum (Garden pea).